Reading from the N-terminus, the 145-residue chain is LIM domain only protein 3 (145 aa).

LIM zinc-binding domains lie at 11-73 and 75-137; these read KGCA…LFGV and GNCA…GLMK.

This chain is LIM domain only protein 3 (LMO3), found in Bos taurus (Bovine).